Consider the following 438-residue polypeptide: GTPase Der (438 aa).

EngA-type G domains lie at 4–168 (PLVT…KSEG) and 177–352 (IKIA…DNYS). GTP contacts are provided by residues 10 to 17 (GRPNVGKS), 57 to 61 (DTGGI), 120 to 123 (NKID), 183 to 190 (GKPNVGKS), 230 to 234 (DTAGL), and 295 to 298 (NKWD). Residues 353 to 437 (KRIATGVLND…GIKMIFKERK (85 aa)) enclose the KH-like domain.

This sequence belongs to the TRAFAC class TrmE-Era-EngA-EngB-Septin-like GTPase superfamily. EngA (Der) GTPase family. In terms of assembly, associates with the 50S ribosomal subunit.

In terms of biological role, GTPase that plays an essential role in the late steps of ribosome biogenesis. The sequence is that of GTPase Der from Clostridium acetobutylicum (strain ATCC 824 / DSM 792 / JCM 1419 / IAM 19013 / LMG 5710 / NBRC 13948 / NRRL B-527 / VKM B-1787 / 2291 / W).